Here is a 333-residue protein sequence, read N- to C-terminus: DNA-directed RNA polymerase subunit alpha (333 aa).

An alpha N-terminal domain (alpha-NTD) region spans residues 1-234; that stretch reads MQISVNEFLT…QQLAAFVDLK (234 aa). The segment at 248-333 is alpha C-terminal domain (alpha-CTD); sequence IDPILLRPVD…SLKKDDKATA (86 aa).

Belongs to the RNA polymerase alpha chain family. As to quaternary structure, homodimer. The RNAP catalytic core consists of 2 alpha, 1 beta, 1 beta' and 1 omega subunit. When a sigma factor is associated with the core the holoenzyme is formed, which can initiate transcription.

It catalyses the reaction RNA(n) + a ribonucleoside 5'-triphosphate = RNA(n+1) + diphosphate. Functionally, DNA-dependent RNA polymerase catalyzes the transcription of DNA into RNA using the four ribonucleoside triphosphates as substrates. The sequence is that of DNA-directed RNA polymerase subunit alpha from Pseudomonas fluorescens (strain Pf0-1).